We begin with the raw amino-acid sequence, 409 residues long: Nucleoprotein (409 aa).

Disordered regions lie at residues 1 to 32, 46 to 84, 121 to 194, and 238 to 259; these read MASG…SSGN, SPQP…KGRR, ADVK…GSED, and VDQV…DKMN. Positions 29–160 are RNA-binding; that stretch reads SSGNASWFQA…GNFRWDFIPL (132 aa). The CoV N NTD domain maps to 31–156; that stretch reads GNASWFQAIK…GGPDGNFRWD (126 aa). Residues 70-84 show a composition bias toward basic residues; sequence YWRRQARFKPGKGRR. The segment covering 162 to 179 has biased composition (low complexity); the sequence is RGRSGRSTAASSAASSRP. Basic and acidic residues-rich tracts occupy residues 180 to 192 and 247 to 259; these read PSRE…RSGS and KGKE…DKMN. 2 positions are modified to phosphoserine; by host: Ser190 and Ser192. The 117-residue stretch at 215-331 folds into the CoV N CTD domain; that stretch reads TKAKADEMAH…QCVDGVGTRP (117 aa). The interval 226–333 is dimerization; that stretch reads RYCKRTIPPG…VDGVGTRPKD (108 aa). The cysteines at positions 320 and 323 are disulfide-linked. Residues 326-409 form a disordered region; the sequence is GVGTRPKDDE…GDSALGENEL (84 aa). Residues 341–356 show a composition bias toward low complexity; the sequence is RSSSRPATRTSSPAPR. Over residues 358–367 the composition is skewed to basic residues; sequence QRLKKEKRPK. The span at 368-384 shows a compositional bias: basic and acidic residues; the sequence is KQDDEVDKALTSDEERN. Residue Thr378 is modified to Phosphothreonine; by host. Position 379 is a phosphoserine; by host (Ser379).

Belongs to the gammacoronavirus nucleocapsid protein family. As to quaternary structure, homooligomer. Both monomeric and oligomeric forms interact with RNA. Interacts with protein M. Interacts with NSP3; this interaction serves to tether the genome to the newly translated replicase-transcriptase complex at a very early stage of infection. Post-translationally, ADP-ribosylated. The ADP-ribosylation is retained in the virion during infection. In terms of processing, phosphorylated on serine and threonine residues.

It localises to the virion. The protein localises to the host endoplasmic reticulum-Golgi intermediate compartment. The protein resides in the host Golgi apparatus. In terms of biological role, packages the positive strand viral genome RNA into a helical ribonucleocapsid (RNP) and plays a fundamental role during virion assembly through its interactions with the viral genome and membrane protein M. Plays an important role in enhancing the efficiency of subgenomic viral RNA transcription as well as viral replication. The polypeptide is Nucleoprotein (Avian infectious bronchitis virus (strain Gray) (IBV)).